We begin with the raw amino-acid sequence, 122 residues long: Large ribosomal subunit protein uL14 (122 aa).

It belongs to the universal ribosomal protein uL14 family. In terms of assembly, part of the 50S ribosomal subunit. Forms a cluster with proteins L3 and L19. In the 70S ribosome, L14 and L19 interact and together make contacts with the 16S rRNA in bridges B5 and B8.

Its function is as follows. Binds to 23S rRNA. Forms part of two intersubunit bridges in the 70S ribosome. The polypeptide is Large ribosomal subunit protein uL14 (Shewanella denitrificans (strain OS217 / ATCC BAA-1090 / DSM 15013)).